A 92-amino-acid chain; its full sequence is Small ribosomal subunit protein uS19 (92 aa).

This sequence belongs to the universal ribosomal protein uS19 family.

In terms of biological role, protein S19 forms a complex with S13 that binds strongly to the 16S ribosomal RNA. The protein is Small ribosomal subunit protein uS19 of Caulobacter sp. (strain K31).